Consider the following 224-residue polypeptide: Transcriptional regulatory protein CiaR (224 aa).

In terms of domain architecture, Response regulatory spans 3–116 (KILLVEDDLG…ELKMRIQALL (114 aa)). Asp-51 carries the post-translational modification 4-aspartylphosphate. Residues 124-222 (ENTLTYGNIV…LRSVGYLLKD (99 aa)) constitute a DNA-binding region (ompR/PhoB-type).

In terms of processing, phosphorylated by CiaH.

It localises to the cytoplasm. Member of the two-component regulatory system CiaH/CiaR. Involved in early steps of competence regulation and in penicillin susceptibility. This Streptococcus pneumoniae (strain ATCC BAA-255 / R6) protein is Transcriptional regulatory protein CiaR (ciaR).